A 554-amino-acid chain; its full sequence is GPI transamidase component PIG-S homolog (554 aa).

The Cytoplasmic portion of the chain corresponds to 1–73 (MSPCKWLTMF…LNKPEKSLKR (73 aa)). The helical transmembrane segment at 74–94 (YALLSFYVIILLAIPVWWKTT) threads the bilayer. Topologically, residues 95–511 (HYERSSLPFE…VTTIYFPDES (417 aa)) are lumenal. 2 N-linked (GlcNAc...) asparagine glycosylation sites follow: Asn132 and Asn375. A helical membrane pass occupies residues 512–532 (KYGIYAPLFAPILIPLLISFI). The Cytoplasmic segment spans residues 533–554 (KEVKDMLRERKLHRVANVPKPN).

Belongs to the PIGS family. Forms a complex with PIG-T homolog, PIG-U homolog and GPI8.

It is found in the endoplasmic reticulum membrane. It participates in glycolipid biosynthesis; glycosylphosphatidylinositol-anchor biosynthesis. Functionally, component of the GPI transamidase complex. Involved in transfer of GPI to proteins. This Schizosaccharomyces pombe (strain 972 / ATCC 24843) (Fission yeast) protein is GPI transamidase component PIG-S homolog (gpi17).